A 199-amino-acid chain; its full sequence is MTKVLVLYHSMYGHIETMANSIAEGAREVSGVEVTIKRVPETMDPARFAAAGGKTEQSAPVATPAELVDYDAIIFGVPTRFGNMTAQMRNFLDQTGGLWAKGALFGKIASVFASTGVGGGQEMTITSTWTTLAHHGMVIVPIGYGTAEMFDISHVGGGTPYGATTLAGGDGSRQPDARELAIARFQGKHVATVAAKMKG.

The region spanning 4 to 190 (VLVLYHSMYG…AIARFQGKHV (187 aa)) is the Flavodoxin-like domain. FMN contacts are provided by residues 10-15 (SMYGHI) and 79-81 (TRF). Residue Tyr-12 participates in NAD(+) binding. A substrate-binding site is contributed by Trp-99. Residue His-134 coordinates FMN.

It belongs to the WrbA family. FMN is required as a cofactor.

It catalyses the reaction a quinone + NADH + H(+) = a quinol + NAD(+). The enzyme catalyses a quinone + NADPH + H(+) = a quinol + NADP(+). This is NAD(P)H dehydrogenase (quinone) from Tolumonas auensis (strain DSM 9187 / NBRC 110442 / TA 4).